The primary structure comprises 270 residues: Glucosamine-6-phosphate deaminase (270 aa).

D72 (proton acceptor; for enolization step) is an active-site residue. The active-site For ring-opening step is D141. H143 (proton acceptor; for ring-opening step) is an active-site residue. E148 (for ring-opening step) is an active-site residue.

The protein belongs to the glucosamine/galactosamine-6-phosphate isomerase family. NagB subfamily.

The enzyme catalyses alpha-D-glucosamine 6-phosphate + H2O = beta-D-fructose 6-phosphate + NH4(+). It participates in amino-sugar metabolism; N-acetylneuraminate degradation; D-fructose 6-phosphate from N-acetylneuraminate: step 5/5. With respect to regulation, allosterically activated by N-acetylglucosamine 6-phosphate (GlcNAc6P). Catalyzes the reversible isomerization-deamination of glucosamine 6-phosphate (GlcN6P) to form fructose 6-phosphate (Fru6P) and ammonium ion. The protein is Glucosamine-6-phosphate deaminase of Bacteroides fragilis (strain ATCC 25285 / DSM 2151 / CCUG 4856 / JCM 11019 / LMG 10263 / NCTC 9343 / Onslow / VPI 2553 / EN-2).